A 122-amino-acid polypeptide reads, in one-letter code: Basic phospholipase A2 PLA-B (122 aa).

7 disulfides stabilise this stretch: Cys-26-Cys-115, Cys-28-Cys-44, Cys-43-Cys-95, Cys-49-Cys-122, Cys-50-Cys-88, Cys-57-Cys-81, and Cys-75-Cys-86. Positions 27, 29, and 31 each coordinate Ca(2+). His-47 is an active-site residue. Asp-48 serves as a coordination point for Ca(2+). The active site involves Asp-89.

Belongs to the phospholipase A2 family. Group II subfamily. D49 sub-subfamily. Requires Ca(2+) as cofactor. Expressed by the venom gland.

It localises to the secreted. The catalysed reaction is a 1,2-diacyl-sn-glycero-3-phosphocholine + H2O = a 1-acyl-sn-glycero-3-phosphocholine + a fatty acid + H(+). Snake venom phospholipase A2 (PLA2) that displays edema-inducing activities. PLA-B is three times more active than PLA-A in edema-inducing activities. PLA2 catalyzes the calcium-dependent hydrolysis of the 2-acyl groups in 3-sn-phosphoglycerides. The protein is Basic phospholipase A2 PLA-B of Protobothrops flavoviridis (Habu).